The chain runs to 302 residues: Putative beta-glucosidase 17 (302 aa).

A signal peptide spans 1–27; that stretch reads MMAVAAATRIAVVVVAALAALAPGARG. A beta-D-glucoside is bound by residues Q47, H149, and 194–195; that span reads NE. E195 serves as the catalytic Proton donor. C214 and C221 are joined by a disulfide. An N-linked (GlcNAc...) asparagine glycan is attached at N274.

It belongs to the glycosyl hydrolase 1 family.

The enzyme catalyses Hydrolysis of terminal, non-reducing beta-D-glucosyl residues with release of beta-D-glucose.. In Oryza sativa subsp. japonica (Rice), this protein is Putative beta-glucosidase 17 (BGLU17).